The sequence spans 317 residues: MAVQGSQRRLLGSLNSTPTAIPQLGLAANQTGAWCLEVSIPDGLFLSLGLVSLVENVLVVATIAKNRNLHSPMYCFICCLALSDLLVSGGNVLETAVILLLEAGALAARAAVVQQLDNVIDVITCSSMLSSLCFLGAIAVDRYISIFYALRYHSIVTLPRARRAIAAIWVASVLFSTLFIAYYDHAAVLLCLVVFFLAMLVLMAVLYVHMLARACQHAQGIARLHKRQRPVHQGFGLKGAVTLTILLGIFFLCWGPFFLHLTLIVLCPQHPTCSCIFKNFNLFLALIICNAIIDPLIYAFRSQELRRTLKEVLTCSW.

At 1-37 the chain is on the extracellular side; sequence MAVQGSQRRLLGSLNSTPTAIPQLGLAANQTGAWCLE. N-linked (GlcNAc...) asparagine glycosylation occurs at Asn-29. Residues 38 to 63 form a helical membrane-spanning segment; it reads VSIPDGLFLSLGLVSLVENVLVVATI. Topologically, residues 64 to 72 are cytoplasmic; sequence AKNRNLHSP. The chain crosses the membrane as a helical span at residues 73–93; it reads MYCFICCLALSDLLVSGGNVL. Over 94–118 the chain is Extracellular; that stretch reads ETAVILLLEAGALAARAAVVQQLDN. The helical transmembrane segment at 119-140 threads the bilayer; it reads VIDVITCSSMLSSLCFLGAIAV. Residues 141 to 163 are Cytoplasmic-facing; the sequence is DRYISIFYALRYHSIVTLPRARR. The helical transmembrane segment at 164–183 threads the bilayer; that stretch reads AIAAIWVASVLFSTLFIAYY. Topologically, residues 184 to 191 are extracellular; sequence DHAAVLLC. A helical transmembrane segment spans residues 192–211; it reads LVVFFLAMLVLMAVLYVHML. Residues 212 to 240 are Cytoplasmic-facing; it reads ARACQHAQGIARLHKRQRPVHQGFGLKGA. Residues 241–266 traverse the membrane as a helical segment; the sequence is VTLTILLGIFFLCWGPFFLHLTLIVL. Residues 267 to 279 lie on the Extracellular side of the membrane; it reads CPQHPTCSCIFKN. A helical membrane pass occupies residues 280–300; sequence FNLFLALIICNAIIDPLIYAF. At 301-317 the chain is on the cytoplasmic side; that stretch reads RSQELRRTLKEVLTCSW. Cys-315 is lipidated: S-palmitoyl cysteine.

Belongs to the G-protein coupled receptor 1 family. In terms of assembly, interacts with MGRN1, but does not undergo MGRN1-mediated ubiquitination; this interaction competes with GNAS-binding and thus inhibits agonist-induced cAMP production. Interacts with OPN3; the interaction results in a decrease in MC1R-mediated cAMP signaling and ultimately a decrease in melanin production in melanocytes.

It localises to the cell membrane. In terms of biological role, receptor for MSH (alpha, beta and gamma) and ACTH. The activity of this receptor is mediated by G proteins which activate adenylate cyclase. Mediates melanogenesis, the production of eumelanin (black/brown) and phaeomelanin (red/yellow), via regulation of cAMP signaling in melanocytes. In Pongo pygmaeus (Bornean orangutan), this protein is Melanocyte-stimulating hormone receptor (MC1R).